Here is a 221-residue protein sequence, read N- to C-terminus: Probable GTP-binding protein EngB (221 aa).

Positions 32–205 (GIPQIAFAGR…RKIVDSLITT (174 aa)) constitute an EngB-type G domain. Residues 40–47 (GRSNAGKS), 67–71 (GKTKL), 85–88 (DLPG), 152–155 (TKID), and 184–186 (VSN) contribute to the GTP site. Serine 47 and threonine 69 together coordinate Mg(2+).

The protein belongs to the TRAFAC class TrmE-Era-EngA-EngB-Septin-like GTPase superfamily. EngB GTPase family. It depends on Mg(2+) as a cofactor.

In terms of biological role, necessary for normal cell division and for the maintenance of normal septation. The protein is Probable GTP-binding protein EngB of Leptospira borgpetersenii serovar Hardjo-bovis (strain JB197).